The chain runs to 379 residues: Protein OSCP1 (379 aa).

As to expression, predominantly expressed in testis.

Its subcellular location is the basal cell membrane. May be involved in drug clearance in the placenta. This is Protein OSCP1 (Oscp1) from Rattus norvegicus (Rat).